Consider the following 323-residue polypeptide: MAAPPHILFAGTPVFAAIILRRLLEAKYHIGAVYTQPDRPSGRGRRPTPSPVKDIAITHQLPLYQPATLKDKGSQAQLAALAPDLMVVAAYGLILPATVLQIPPLGCINVHASLLPRWRGAAPIQRALLAGDKVTGISIMQMDAGLDTGPVVHTARYPIHPKDTAATVHDQLAELGAEALLQCLPSLLEKKANIATLQDESQACYAPKIRKEEAWLDWSQPAVLLERQVRAFNPWPVAQTQIGGKTLRVWSAAALAQTANALPGTLLAVHKTGIDVATGNGTLRLLEVQLAGKRVMTVQDYLNAHTLTPGIVLVKNPGKAKSP.

Position 113–116 (Ser113–Pro116) interacts with (6S)-5,6,7,8-tetrahydrofolate.

This sequence belongs to the Fmt family.

The catalysed reaction is L-methionyl-tRNA(fMet) + (6R)-10-formyltetrahydrofolate = N-formyl-L-methionyl-tRNA(fMet) + (6S)-5,6,7,8-tetrahydrofolate + H(+). In terms of biological role, attaches a formyl group to the free amino group of methionyl-tRNA(fMet). The formyl group appears to play a dual role in the initiator identity of N-formylmethionyl-tRNA by promoting its recognition by IF2 and preventing the misappropriation of this tRNA by the elongation apparatus. This is Methionyl-tRNA formyltransferase from Nitrosococcus oceani (strain ATCC 19707 / BCRC 17464 / JCM 30415 / NCIMB 11848 / C-107).